The primary structure comprises 303 residues: Scaffolding protein (303 aa).

The tract at residues methionine 1 to arginine 74 is post-transcriptional autoregulatory domain. The segment at alanine 275–arginine 303 is interaction with the capsid protein.

In terms of assembly, homodimer. Homotetramer. Interacts with the portal protein; this interaction initiates procapsid assembly, thereby ensuring incorporation of only one portal ring per capsid. Interacts (via C-terminus) with the capsid protein; this interaction allow to form the procapsid, in which the scaffolding protein forms an internal shell in the icosahedrally arranged capsid protein subunits.

In terms of biological role, required for procapsid assembly. The interior of the prohead is filled with the scaffolding protein. The scaffolding protein is lost from the structure during packaging. Scaffolding protein exit is followed by the expansion of the procapsid into a mature capsid. This chain is Scaffolding protein (8), found in Salmonella typhimurium (Bacteriophage P22).